A 367-amino-acid chain; its full sequence is Ataxin-7-like protein 3 (367 aa).

Residues 84 to 105 (CVCPNCSRSIAASRFAPHLEKC) form an SGF11-type zinc finger. Positions 116 to 125 (ANRRIASSNN) are enriched in low complexity. Residues 116–184 (ANRRIASSNN…GELSGSVNPD (69 aa)) form a disordered region. Residues 132-141 (DQEDNDDIND) are compositionally biased toward acidic residues. The SCA7 domain occupies 199–266 (LGPEELRSIL…TMLENEAYEP (68 aa)). Over residues 280 to 299 (ASSDISPSDSASSKASTNNS) the composition is skewed to low complexity. A disordered region spans residues 280 to 367 (ASSDISPSDS…PAPSIYDDLN (88 aa)). Residues 318–329 (GERDKAQERDRI) are compositionally biased toward basic and acidic residues. Residues 330–346 (AGSGSSGSSSQNALGLS) show a composition bias toward low complexity.

This sequence belongs to the SGF11 family. Component of some SAGA transcription coactivator-HAT complexes. Within the SAGA complex, participates in a subcomplex of SAGA called the DUB module (deubiquitination module).

It is found in the nucleus. Functionally, component of the transcription regulatory histone acetylation (HAT) complex SAGA, a multiprotein complex that activates transcription by remodeling chromatin and mediating histone acetylation and deubiquitination. Within the SAGA complex, participates in a subcomplex that specifically deubiquitinates histone H2B. The SAGA complex is recruited to specific gene promoters by activators, where it is required for transcription. The protein is Ataxin-7-like protein 3 (atxn7l3) of Danio rerio (Zebrafish).